The chain runs to 828 residues: Putative alpha-1,3-mannosyltransferase MNN12 (828 aa).

Over 1–13 (MIEKLTIKRSRQK) the chain is Cytoplasmic. The helical transmembrane segment at 14 to 34 (VIAYSVIIIWLMIVNIWLLNN) threads the bilayer. At 35–828 (YHLNSSTLTR…YYGDVWVGME (794 aa)) the chain is on the lumenal side. An N-linked (GlcNAc...) asparagine glycan is attached at Asn38. The disordered stretch occupies residues 80-104 (HQEEDVPNSQSTDNSLIKPTSPAKN). Over residues 86–103 (PNSQSTDNSLIKPTSPAK) the composition is skewed to polar residues. N-linked (GlcNAc...) asparagine glycosylation is found at Asn247, Asn437, and Asn591.

It belongs to the MNN1/MNT family.

It localises to the golgi apparatus membrane. It participates in protein modification; protein glycosylation. Functionally, responsible for addition of the terminal mannose residues to the outer chain of core N-linked polysaccharides and to O-linked mannotriose. Implicated in late Golgi modifications. This is Putative alpha-1,3-mannosyltransferase MNN12 (MNN12) from Candida albicans (strain SC5314 / ATCC MYA-2876) (Yeast).